Consider the following 87-residue polypeptide: Omega-lycotoxin-Am1d (87 aa).

The first 17 residues, 1-17 (MKLSIFFVLFFIAIAYC), serve as a signal peptide directing secretion. Residues 18 to 40 (QPEFLDDEEDEVEETLPVAEEGR) constitute a propeptide that is removed on maturation. 4 disulfide bridges follow: cysteine 44-cysteine 59, cysteine 51-cysteine 64, cysteine 58-cysteine 84, and cysteine 66-cysteine 82.

It belongs to the neurotoxin omega-lctx family. In terms of tissue distribution, expressed by the venom gland.

It is found in the secreted. Its function is as follows. Modulates Cav2.1/CACNA1A voltage-gated calcium channels (P/Q-type currents) in rat cerebellar Purkinje cells and hippocampal CA1-CA3 neurons. At saturating concentrations (&gt;10 nM) decelerates activation kinetics and slightly increases peak amplitude without affecting deactivation kinetics. In vivo, does not cause death when intravenously injected into mice. In rat models, through its activity on Cav2.1/CACNA1A, has an ameliorative effect on memory defects provoked by hyperstimulation of N-methyl-D-aspartate receptors (NMDARs) in the hippocampus. In Alopecosa marikovskyi (Wolf spider), this protein is Omega-lycotoxin-Am1d.